The chain runs to 254 residues: Demethylmenaquinone methyltransferase (254 aa).

S-adenosyl-L-methionine is bound by residues threonine 62, aspartate 80, 122 to 123 (DG), and serine 139.

The protein belongs to the class I-like SAM-binding methyltransferase superfamily. MenG/UbiE family.

It carries out the reaction a 2-demethylmenaquinol + S-adenosyl-L-methionine = a menaquinol + S-adenosyl-L-homocysteine + H(+). Its pathway is quinol/quinone metabolism; menaquinone biosynthesis; menaquinol from 1,4-dihydroxy-2-naphthoate: step 2/2. Functionally, methyltransferase required for the conversion of demethylmenaquinol (DMKH2) to menaquinol (MKH2). In Parafrankia sp. (strain EAN1pec), this protein is Demethylmenaquinone methyltransferase.